The following is a 279-amino-acid chain: MEPRVAELKQKIEDTLCPFGFEVYPFQVAWYNELLPPAFHLPFPGPTLAFLVLSTPAMFDRALKPFLKSCHFQTLRDPVDQCVSYHLRSVTEKFPEVHMEVIADYEVHPNRRPKILAQTAAHVAGAAYYYQRQDVDADPWGTQHIAGVCIHPRFGGWFAIRGVMLLPGIEVPNLPPRKPPDCVPTRAGRITLLEGFNFHWRDWTYRDAVTPEERYSEEQKIYFSTPPAQRLALLGLAQPSEHPSTTSELPLSLLTKPQNSRRARSWLSPSVSPPVSPGP.

Substrate contacts are provided by residues D104, 115–118 (ILAQ), 129–131 (YYQ), C149, and I160. A disordered region spans residues 239 to 279 (PSEHPSTTSELPLSLLTKPQNSRRARSWLSPSVSPPVSPGP). Residues 243 to 257 (PSTTSELPLSLLTKP) are compositionally biased toward low complexity. S247, S272, and S276 each carry phosphoserine.

It belongs to the MMACHC family. In terms of assembly, monomer in the absence of bound substrate. Homodimer; dimerization is triggered by binding to FMN or adenosylcobalamin. Interacts with LMBRD1 and ABCD4; the interaction ensures the transport of cobalamin from the lysosome to the cytoplasm. Forms a multiprotein complex with MMADHC, MTR and MTRR; the interaction with MTR could modulate MMACHC-dependent processing of cobalamin. Heterodimer with MMADHC; the interaction might play a role in the regulation of the balance between AdoCbl and MeCbl synthesis. FAD serves as cofactor. It depends on FMN as a cofactor. As to expression, detected in liver and kidney (at protein level). Detected in embryos.

The protein resides in the cytoplasm. The protein localises to the cytosol. The catalysed reaction is 2 cob(II)alamin-[cyanocobalamin reductase] + 2 hydrogen cyanide + NADP(+) = 2 cyanocob(III)alamin + 2 apo-[cyanocobalamin reductase] + NADPH + H(+). The enzyme catalyses apo-[alkylcobalamin reductase] + an R-cob(III)alamin + glutathione = cob(I)alamin-[alkylcobalamin reductase] + an S-substituted glutathione + H(+). It carries out the reaction apo-[alkylcobalamin reductase] + methylcob(III)alamin + glutathione = S-methyl glutathione + cob(I)alamin-[alkylcobalamin reductase] + H(+). It catalyses the reaction apo-[alkylcobalamin reductase] + adenosylcob(III)alamin + glutathione = S-adenosylglutathione + cob(I)alamin-[alkylcobalamin reductase] + H(+). Functionally, cobalamin (vitamin B12) cytosolic chaperone that catalyzes the reductive decyanation of cyanocob(III)alamin (cyanocobalamin, CNCbl) to yield cob(II)alamin and cyanide, using FAD or FMN as cofactors and NADPH as cosubstrate. Cyanocobalamin constitutes the inactive form of vitamin B12 introduced from the diet, and is converted into the active cofactors methylcobalamin (MeCbl) involved in methionine biosynthesis, and 5'-deoxyadenosylcobalamin (AdoCbl) involved in the TCA cycle. Forms a complex with the lysosomal transporter ABCD4 and its chaperone LMBRD1, to transport cobalamin across the lysosomal membrane into the cytosol. The processing of cobalamin in the cytosol occurs in a multiprotein complex composed of at least MMACHC, MMADHC, MTRR (methionine synthase reductase) and MTR (methionine synthase) which may contribute to shuttle safely and efficiently cobalamin towards MTR in order to produce methionine. Also acts as a glutathione transferase by catalyzing the dealkylation of the alkylcob(III)alamins MeCbl and AdoCbl, using the thiolate of glutathione for nucleophilic displacement to generate cob(I)alamin and the corresponding glutathione thioether. The conversion of incoming MeCbl or AdoCbl into a common intermediate cob(I)alamin is necessary to meet the cellular needs for both cofactors. Cysteine and homocysteine cannot substitute for glutathione in this reaction. This is Cyanocobalamin reductase / alkylcobalamin dealkylase from Mus musculus (Mouse).